We begin with the raw amino-acid sequence, 203 residues long: MGAEKITSKIMEDAKIQANVILAEAQKEKEALIKKAHEEAEKKKQAILKKGEKDAEMTRNRILAEARLSAKKNSLEERERTIAKAIQKLEEDLVKLPQKDEYKDILLKMIITGVYSVGGGELDLQLNKNDWKLIDDSTLWALEKEMEDRLKKVTVLKKGESLPIIGGCVVKTADKTKVSDNSLEATFERNLDIIRAKIAEMLF.

It belongs to the V-ATPase E subunit family. Has multiple subunits with at least A(3), B(3), C, D, E, F, H, I and proteolipid K(x).

Its subcellular location is the cell membrane. Functionally, component of the A-type ATP synthase that produces ATP from ADP in the presence of a proton gradient across the membrane. The polypeptide is A-type ATP synthase subunit E (Methanococcus vannielii (strain ATCC 35089 / DSM 1224 / JCM 13029 / OCM 148 / SB)).